Reading from the N-terminus, the 165-residue chain is Phosphopantetheine adenylyltransferase (165 aa).

Thr10 provides a ligand contact to substrate. ATP contacts are provided by residues 10–11 (TF) and His18. Positions 42, 75, and 89 each coordinate substrate. ATP is bound by residues 90-92 (GVR), Glu100, and 125-131 (VSFISSS).

This sequence belongs to the bacterial CoaD family. As to quaternary structure, homohexamer. It depends on Mg(2+) as a cofactor.

It is found in the cytoplasm. The catalysed reaction is (R)-4'-phosphopantetheine + ATP + H(+) = 3'-dephospho-CoA + diphosphate. Its pathway is cofactor biosynthesis; coenzyme A biosynthesis; CoA from (R)-pantothenate: step 4/5. Its function is as follows. Reversibly transfers an adenylyl group from ATP to 4'-phosphopantetheine, yielding dephospho-CoA (dPCoA) and pyrophosphate. The chain is Phosphopantetheine adenylyltransferase from Buchnera aphidicola subsp. Acyrthosiphon pisum (strain 5A).